A 236-amino-acid polypeptide reads, in one-letter code: Coat protein (236 aa).

The disordered stretch occupies residues 1 to 27 (MTTPANTTQAVGSTKSTTTTTAGATPA). Low complexity predominate over residues 7–27 (TTQAVGSTKSTTTTTAGATPA).

Belongs to the potexvirus capsid protein family.

The protein resides in the virion. Its function is as follows. Required for genome encapsidation. Forms ribonucleoprotein complexes along with TGB1 helicase and viral RNA. This is Coat protein from Brassica campestris (Field mustard).